A 999-amino-acid polypeptide reads, in one-letter code: Hypoxia up-regulated protein 1 (999 aa).

The first 32 residues, 1–32 (MADKVRRQRPRRRVCWALVAVLLADLLALSDT), serve as a signal peptide directing secretion. N-linked (GlcNAc...) asparagine glycosylation is found at Asn155, Asn222, and Asn515. A Phosphoserine modification is found at Ser567. The interval 578–694 (GNTISSLFGG…KKQKPARKRR (117 aa)) is disordered. Asn596 carries N-linked (GlcNAc...) asparagine glycosylation. Composition is skewed to basic and acidic residues over residues 611–626 (GSKD…KEEA) and 641–672 (PKGD…KAEA). N-linked (GlcNAc...) asparagine glycosylation is found at Asn830, Asn862, and Asn869. Lys883 carries the N6-acetyllysine modification. Positions 909-999 (AKFTKPRPRP…QKRPLKNDEL (91 aa)) are disordered. 2 N-linked (GlcNAc...) asparagine glycosylation sites follow: Asn922 and Asn931. A Prevents secretion from ER motif is present at residues 996-999 (NDEL).

The protein belongs to the heat shock protein 70 family. Part of a large chaperone multiprotein complex comprising DNAJB11, HSP90B1, HSPA5, HYOU, PDIA2, PDIA4, PDIA6, PPIB, SDF2L1, UGGT1 and very small amounts of ERP29, but not, or at very low levels, CALR nor CANX. Highly expressed in tissues that contain well-developed endoplasmic reticulum and synthesize large amounts of secretory proteins. Highly expressed in liver and pancreas and lower expression in brain and kidney. Also expressed in macrophages within aortic atherosclerotic plaques, and in breast cancers.

It localises to the endoplasmic reticulum lumen. Functionally, has a pivotal role in cytoprotective cellular mechanisms triggered by oxygen deprivation. Promotes HSPA5/BiP-mediated ATP nucleotide exchange and thereby activates the unfolded protein response (UPR) pathway in the presence of endoplasmic reticulum stress. May play a role as a molecular chaperone and participate in protein folding. The chain is Hypoxia up-regulated protein 1 (HYOU1) from Homo sapiens (Human).